Reading from the N-terminus, the 464-residue chain is Galactose-proton symporter (464 aa).

Residues 1–15 lie on the Cytoplasmic side of the membrane; the sequence is MPDAKKQGRSNKAMT. Residues 16-36 form a helical membrane-spanning segment; it reads FFVCFLAALAGLLFGLDIGVI. The Periplasmic portion of the chain corresponds to 37 to 56; the sequence is AGALPFIADEFQITSHTQEW. Residues 57 to 77 form a helical membrane-spanning segment; that stretch reads VVSSMMFGAAVGAVGSGWLSF. The Cytoplasmic segment spans residues 78–84; the sequence is KLGRKKS. Residues 85-105 traverse the membrane as a helical segment; it reads LMIGAILFVAGSLFSAAAPNV. The Periplasmic segment spans residues 106-112; that stretch reads EVLILSR. A helical membrane pass occupies residues 113-133; that stretch reads VLLGLAVGVASYTAPLYLSEI. The Cytoplasmic portion of the chain corresponds to 134–139; that stretch reads APEKIR. A helical membrane pass occupies residues 140-160; sequence GSMISMYQLMITIGILGAYLS. At 161–171 the chain is on the periplasmic side; it reads DTAFSYTGAWR. The chain crosses the membrane as a helical span at residues 172-192; it reads WMLGVIIIPAILLLIGVFFLP. The Cytoplasmic portion of the chain corresponds to 193-250; that stretch reads DSPRWFAAKRRFVDAERVLLRLRDTSAEAKRELDEIRESLQVKQSGWALFKENSNFRR. Residues 251 to 271 traverse the membrane as a helical segment; that stretch reads AVFLGVLLQVMQQFTGMNVIM. Residues 272–290 lie on the Periplasmic side of the membrane; the sequence is YYAPKIFELAGYTNTTEQM. Residues 291 to 311 form a helical membrane-spanning segment; sequence WGTVIVGLTNVLATFIAIGLV. The Cytoplasmic portion of the chain corresponds to 312 to 321; the sequence is DRWGRKPTLT. Residues 322–342 traverse the membrane as a helical segment; the sequence is LGFLVMAAGMGVLGTMMHIGI. The Periplasmic segment spans residues 343–351; sequence HSPSAQYFA. A helical membrane pass occupies residues 352–372; it reads IAMLLMFIVGFAMSAGPLIWV. Topologically, residues 373-394 are cytoplasmic; the sequence is LCSEIQPLKGRDFGITCSTATN. A helical transmembrane segment spans residues 395 to 415; the sequence is WIANMIVGATFLTMLNTLGNA. A topological domain (periplasmic) is located at residue N416. A helical transmembrane segment spans residues 417–437; sequence TFWVYAALNVLFILLTLWLVP. Residues 438-464 are Cytoplasmic-facing; sequence ETKHVSLEHIERNLMKGRKLREIGAHD.

The protein belongs to the major facilitator superfamily. Sugar transporter (TC 2.A.1.1) family.

The protein localises to the cell inner membrane. Functionally, uptake of galactose across the boundary membrane with the concomitant transport of protons into the cell (symport system). The polypeptide is Galactose-proton symporter (galP) (Escherichia coli O6:H1 (strain CFT073 / ATCC 700928 / UPEC)).